Reading from the N-terminus, the 261-residue chain is Zinc import ATP-binding protein ZnuC (261 aa).

In terms of domain architecture, ABC transporter spans 6–221; the sequence is IRLEKVAVRF…PAFVELFGNN (216 aa). 38-45 lines the ATP pocket; it reads GPNGAGKT.

Belongs to the ABC transporter superfamily. Zinc importer (TC 3.A.1.15.5) family. In terms of assembly, the complex is composed of two ATP-binding proteins (ZnuC), two transmembrane proteins (ZnuB) and a solute-binding protein (ZnuA).

The protein resides in the cell inner membrane. The catalysed reaction is Zn(2+)(out) + ATP(in) + H2O(in) = Zn(2+)(in) + ADP(in) + phosphate(in) + H(+)(in). In terms of biological role, part of the ABC transporter complex ZnuABC involved in zinc import. Responsible for energy coupling to the transport system. This is Zinc import ATP-binding protein ZnuC from Pseudomonas fluorescens (strain Pf0-1).